The sequence spans 300 residues: 4-hydroxy-tetrahydrodipicolinate synthase (300 aa).

Threonine 55 contributes to the pyruvate binding site. The active-site Proton donor/acceptor is the tyrosine 143. The Schiff-base intermediate with substrate role is filled by lysine 171. Isoleucine 211 contacts pyruvate.

It belongs to the DapA family. As to quaternary structure, homotetramer; dimer of dimers.

It is found in the cytoplasm. It carries out the reaction L-aspartate 4-semialdehyde + pyruvate = (2S,4S)-4-hydroxy-2,3,4,5-tetrahydrodipicolinate + H2O + H(+). It functions in the pathway amino-acid biosynthesis; L-lysine biosynthesis via DAP pathway; (S)-tetrahydrodipicolinate from L-aspartate: step 3/4. Catalyzes the condensation of (S)-aspartate-beta-semialdehyde [(S)-ASA] and pyruvate to 4-hydroxy-tetrahydrodipicolinate (HTPA). This is 4-hydroxy-tetrahydrodipicolinate synthase from Mycobacterium bovis (strain ATCC BAA-935 / AF2122/97).